Consider the following 111-residue polypeptide: Large ribosomal subunit protein uL23 (111 aa).

Belongs to the universal ribosomal protein uL23 family. In terms of assembly, part of the 50S ribosomal subunit. Contacts protein L29, and trigger factor when it is bound to the ribosome.

One of the early assembly proteins it binds 23S rRNA. One of the proteins that surrounds the polypeptide exit tunnel on the outside of the ribosome. Forms the main docking site for trigger factor binding to the ribosome. The polypeptide is Large ribosomal subunit protein uL23 (Chlamydia felis (strain Fe/C-56) (Chlamydophila felis)).